Consider the following 626-residue polypeptide: Chaperone protein HtpG (626 aa).

An a; substrate-binding region spans residues 1–341 (MRKKKFKAES…SEDLSLNISR (341 aa)). The tract at residues 342-552 (EMLQHDRQLK…DGEVTIEMEK (211 aa)) is b. The c stretch occupies residues 553 to 626 (VLNAMPDSQQ…FTNDICKVMV (74 aa)).

It belongs to the heat shock protein 90 family. Homodimer.

The protein resides in the cytoplasm. Molecular chaperone. Has ATPase activity. The chain is Chaperone protein HtpG from Bacillus velezensis (strain DSM 23117 / BGSC 10A6 / LMG 26770 / FZB42) (Bacillus amyloliquefaciens subsp. plantarum).